Here is a 278-residue protein sequence, read N- to C-terminus: Bis(5'-nucleosyl)-tetraphosphatase, symmetrical (278 aa).

The protein belongs to the Ap4A hydrolase family.

The catalysed reaction is P(1),P(4)-bis(5'-adenosyl) tetraphosphate + H2O = 2 ADP + 2 H(+). Its function is as follows. Hydrolyzes diadenosine 5',5'''-P1,P4-tetraphosphate to yield ADP. The polypeptide is Bis(5'-nucleosyl)-tetraphosphatase, symmetrical (Buchnera aphidicola subsp. Baizongia pistaciae (strain Bp)).